The chain runs to 21 residues: FPIEEDKIVGGYECPKHXVPW.

A propeptide spans 1 to 7 (FPIEEDK) (activation peptide). Residues 8 to 21 (IVGGYECPKHXVPW) form the Peptidase S1 domain.

The protein belongs to the peptidase S1 family.

Its subcellular location is the secreted. The protein resides in the extracellular space. The enzyme catalyses Preferential cleavage: Arg-|-Xaa, Lys-|-Xaa.. The sequence is that of Trypsin from Protopterus aethiopicus (Marbled lungfish).